A 318-amino-acid chain; its full sequence is NAD(P)H-dependent D-xylose reductase (318 aa).

Tyr48 functions as the Proton donor in the catalytic mechanism. His110 is a binding site for substrate. NAD(+) contacts are provided by residues 165–166, 214–223, and 270–280; these read SN, SSFGPQSFVE, and KSNTVPRLLEN.

This sequence belongs to the aldo/keto reductase family.

It carries out the reaction xylitol + NAD(+) = D-xylose + NADH + H(+). The enzyme catalyses xylitol + NADP(+) = D-xylose + NADPH + H(+). The protein operates within carbohydrate metabolism; D-xylose degradation. With respect to regulation, NADP(+) is a potent inhibitor of both the NADPH- and NADH-linked xylose reduction, whereas NAD(+) showS strong inhibition only with the NADH-linked reaction. Functionally, reduces D-xylose into xylitol. Has a preference for NADPH, but can also utilize NADH as cosubstrate. The protein is NAD(P)H-dependent D-xylose reductase (XYL1) of Scheffersomyces stipitis (strain ATCC 58785 / CBS 6054 / NBRC 10063 / NRRL Y-11545) (Yeast).